The chain runs to 925 residues: Leucine--tRNA ligase (925 aa).

The 'HIGH' region motif lies at 40-51 (PYPSGAGLHVGH). The 'KMSKS' region signature appears at 700–704 (KMSKS). Residue Lys703 participates in ATP binding.

Belongs to the class-I aminoacyl-tRNA synthetase family.

It localises to the cytoplasm. It carries out the reaction tRNA(Leu) + L-leucine + ATP = L-leucyl-tRNA(Leu) + AMP + diphosphate. The sequence is that of Leucine--tRNA ligase from Porphyromonas gingivalis (strain ATCC 33277 / DSM 20709 / CIP 103683 / JCM 12257 / NCTC 11834 / 2561).